The sequence spans 128 residues: Small ribosomal subunit protein uS11 (128 aa).

The protein belongs to the universal ribosomal protein uS11 family. In terms of assembly, part of the 30S ribosomal subunit. Interacts with proteins S7 and S18. Binds to IF-3.

Functionally, located on the platform of the 30S subunit, it bridges several disparate RNA helices of the 16S rRNA. Forms part of the Shine-Dalgarno cleft in the 70S ribosome. The protein is Small ribosomal subunit protein uS11 of Phytoplasma australiense.